A 441-amino-acid chain; its full sequence is MRLTRYFLPILKETPKEAEIASHRLMLRAGMLRQEAAGIYAWLPLGFRVLKKIERIVREEQNRAGAIELLMPTLQLADLWRESGRYDAYGPEMLRIADRHKRELLYGPTNEEMITEIFRSYVKSYRNLPLNLYHIQWKFRDEQRPRFGVMRGREFLMKDAYSFDLDEAAARLSYNKMFVAYLRTFARMGLKAIPMRAETGPIGGDLSHEFIVLAETGESGVFCNKDVLDLPVPGEDVDYDSDLTPIIKQWTELYAATEDVHDAARYETEVPAEKRVNTRGIEVGQIFYFGTKYSDSMKALVVGPDGVEKPVHSGSYGVGVSRLVGAIIEACHDENGIKWPEAVAPFTVAILNLKQGASDTDAACEKLYRALTANGVDVLYDDTDQRPGGKFATADLIGIPWQILIGPKGLAEGKVEIKCRADGSRELMSPEDALARFGAKA.

This sequence belongs to the class-II aminoacyl-tRNA synthetase family. ProS type 2 subfamily. Homodimer.

It is found in the cytoplasm. It catalyses the reaction tRNA(Pro) + L-proline + ATP = L-prolyl-tRNA(Pro) + AMP + diphosphate. Its function is as follows. Catalyzes the attachment of proline to tRNA(Pro) in a two-step reaction: proline is first activated by ATP to form Pro-AMP and then transferred to the acceptor end of tRNA(Pro). The sequence is that of Proline--tRNA ligase from Afipia carboxidovorans (strain ATCC 49405 / DSM 1227 / KCTC 32145 / OM5) (Oligotropha carboxidovorans).